The primary structure comprises 110 residues: uncharacterized protein (110 aa).

Positions 86–110 (SEEIDEPVMKKRHRRKGSPHRAPFF) are disordered. Over residues 95–104 (KKRHRRKGSP) the composition is skewed to basic residues.

This is an uncharacterized protein from Arabidopsis thaliana (Mouse-ear cress).